The primary structure comprises 325 residues: SPbeta prophage-derived uncharacterized protein YopR (325 aa).

This Bacillus subtilis (strain 168) protein is SPbeta prophage-derived uncharacterized protein YopR (yopR).